We begin with the raw amino-acid sequence, 160 residues long: Cytochrome b6-f complex subunit 4 (160 aa).

Transmembrane regions (helical) follow at residues 36-56 (LLYIFPVVILGTIACNVGLAV), 95-115 (LLGVLLMVSVPTGLLTVPFLE), and 131-151 (TVFLIGTAVALWLGIGATLPI).

Belongs to the cytochrome b family. PetD subfamily. In terms of assembly, the 4 large subunits of the cytochrome b6-f complex are cytochrome b6, subunit IV (17 kDa polypeptide, petD), cytochrome f and the Rieske protein, while the 4 small subunits are petG, petL, petM and petN. The complex functions as a dimer.

The protein resides in the plastid. It localises to the chloroplast thylakoid membrane. Its function is as follows. Component of the cytochrome b6-f complex, which mediates electron transfer between photosystem II (PSII) and photosystem I (PSI), cyclic electron flow around PSI, and state transitions. This Saccharum hybrid (Sugarcane) protein is Cytochrome b6-f complex subunit 4.